The chain runs to 431 residues: MRIVIKNGIVIDGFGGEEKADILINYGIIKGIDKNIDVSDAIVIDAEGKYVLPGFVDMHTHLRQPGFEEKETIRTGTESAAAGGFTTVACMPNTNPPIDSEVVVEYVKAVAQREGVVKVLPIGAMTKGMKGEEITEMAKLKKAGVVALSDDGFPIMSAGIMKRVMTYGKMYDLLMITHCEDKTLSGEGVMNSGIIATMLGLKGIPREAEEVMLARNIILAKATGAKLHIAHVSTKGSVELIRRAKEEGVSITAEVTPHHLTRTDEAVYNYDTNTKVFPPLRTREDVEALIEGLKDGTIDAIATDHAPHTKDDKKVPYDMAPFGISGLETAFSVINTFLIQTGIITMKALVNYMSMNPARILGISNGIRVGATADIVIVNPHEEYTVDKEKFKSKGKNTPYHGMKLKGVVEYTIVEGQIRYQKNKKFEKVEI.

Zn(2+)-binding residues include His-59 and His-61. Substrate is bound by residues 61–63 and Asn-93; that span reads HLR. 4 residues coordinate Zn(2+): Asp-151, His-178, His-231, and Asp-304. Residue Asp-304 is part of the active site. Residues His-308 and 322 to 323 contribute to the substrate site; that span reads FG.

Belongs to the metallo-dependent hydrolases superfamily. DHOase family. Class I DHOase subfamily. It depends on Zn(2+) as a cofactor.

It carries out the reaction (S)-dihydroorotate + H2O = N-carbamoyl-L-aspartate + H(+). Its pathway is pyrimidine metabolism; UMP biosynthesis via de novo pathway; (S)-dihydroorotate from bicarbonate: step 3/3. Functionally, catalyzes the reversible cyclization of carbamoyl aspartate to dihydroorotate. The sequence is that of Dihydroorotase from Caldanaerobacter subterraneus subsp. tengcongensis (strain DSM 15242 / JCM 11007 / NBRC 100824 / MB4) (Thermoanaerobacter tengcongensis).